The primary structure comprises 257 residues: Nopaline permease ATP-binding protein P (257 aa).

Residues 8–253 (LVAEDVHKNF…PTSPRCRAFL (246 aa)) enclose the ABC transporter domain. Residue 40–47 (GSSGSGKS) coordinates ATP.

This sequence belongs to the ABC transporter superfamily.

Its subcellular location is the cell inner membrane. Its function is as follows. Component of the nopaline active transport system probably consisting of four subunits: Q, M, P and T. This system is also capable of transporting octopine provided that catabolic functions are induced with nopaline. The polypeptide is Nopaline permease ATP-binding protein P (nocP) (Agrobacterium fabrum (strain C58 / ATCC 33970) (Agrobacterium tumefaciens (strain C58))).